The sequence spans 147 residues: Large ribosomal subunit protein uL15 (147 aa).

Residues 1–20 (MTLRLNDLKPADGARTERTR) are compositionally biased toward basic and acidic residues. The segment at 1 to 61 (MTLRLNDLKP…GFEGGQTPMQ (61 aa)) is disordered. Residues 23-33 (RGIGSGLGKTA) show a composition bias toward gly residues. The span at 34 to 47 (GRGHKGSFARKGGG) shows a compositional bias: basic residues.

It belongs to the universal ribosomal protein uL15 family. In terms of assembly, part of the 50S ribosomal subunit.

Its function is as follows. Binds to the 23S rRNA. This chain is Large ribosomal subunit protein uL15, found in Xanthomonas euvesicatoria pv. vesicatoria (strain 85-10) (Xanthomonas campestris pv. vesicatoria).